Reading from the N-terminus, the 331-residue chain is 4-hydroxythreonine-4-phosphate dehydrogenase (331 aa).

Substrate-binding residues include histidine 137 and threonine 138. The a divalent metal cation site is built by histidine 167, histidine 212, and histidine 267. Positions 275, 284, and 293 each coordinate substrate.

This sequence belongs to the PdxA family. In terms of assembly, homodimer. Zn(2+) serves as cofactor. The cofactor is Mg(2+). Co(2+) is required as a cofactor.

It is found in the cytoplasm. It catalyses the reaction 4-(phosphooxy)-L-threonine + NAD(+) = 3-amino-2-oxopropyl phosphate + CO2 + NADH. Its pathway is cofactor biosynthesis; pyridoxine 5'-phosphate biosynthesis; pyridoxine 5'-phosphate from D-erythrose 4-phosphate: step 4/5. Its function is as follows. Catalyzes the NAD(P)-dependent oxidation of 4-(phosphooxy)-L-threonine (HTP) into 2-amino-3-oxo-4-(phosphooxy)butyric acid which spontaneously decarboxylates to form 3-amino-2-oxopropyl phosphate (AHAP). The protein is 4-hydroxythreonine-4-phosphate dehydrogenase of Yersinia enterocolitica serotype O:8 / biotype 1B (strain NCTC 13174 / 8081).